The sequence spans 521 residues: Insulinoma-associated protein 1 (521 aa).

Residues 1–12 (MPRGFLVKRSKK) show a composition bias toward basic residues. The tract at residues 1-20 (MPRGFLVKRSKKSTPVSYRV) is SNAG domain. 3 disordered regions span residues 1–59 (MPRG…PPAL), 76–107 (GPPP…PTRP), and 180–230 (AEAA…KPKA). The tract at residues 2-7 (PRGFLV) is required and sufficient for interaction with KDM1A. Positions 43–56 (PPVPSPGPLPPPPP) are necessary for interaction with CCND1. Pro residues-rich tracts occupy residues 43 to 58 (PPVP…PPPA) and 76 to 85 (GPPPPPPPGP). The segment covering 209 to 223 (AAVATEPPAKAAKAP) has biased composition (low complexity). Residues 272 to 292 (FICQLCKEEYADPFALAQHKC) form a C2H2-type 1; atypical zinc finger. The C2H2-type 2 zinc finger occupies 300-322 (YRCPECAKVFSCPANLASHRRWH). Positions 320–369 (RWHKPRPVPAAARAPEPEAATRAEAREAAGGGSSDRDTPSPGGVSESGSE) are disordered. Residues 334–346 (PEPEAATRAEARE) are compositionally biased toward basic and acidic residues. The C2H2-type 3 zinc finger occupies 373 to 395 (YECHHCAKKFRRQAYLRKHLLAH). A disordered region spans residues 398-419 (ALQAKGAPPPPPPPPPPAEDIL). Over residues 404–415 (APPPPPPPPPPA) the composition is skewed to pro residues. 2 C2H2-type zinc fingers span residues 452–475 (HLCP…RLLH) and 480–503 (FPCK…NKCH).

The protein belongs to the INSM1 family. As to quaternary structure, interacts (via the N-terminal region) with CCND1 (via cyclin N-terminal domain); the interaction competes with the binding of CCND1 to CDK4 during cell cycle progression and increases its transcriptional repressor activity. Interacts with HDAC3; the interaction increases its transcriptional repressor activity. Interacts (via the SNAG domain) with HDAC1. Interacts (via the SNAG domain) with HDAC2. Interacts (via the SNAG domain) with KDM1A. Interacts (via the SNAG domain) with RCOR1. Interacts with SORBS1. Expressed in adrenal gland. Expressed in the dentate gyrus of the hippocampus and the wall of the lateral ventricle. Expressed in pancreatic and intestinal endocrine cells.

The protein resides in the nucleus. Sequence-specific DNA-binding transcriptional regulator that plays a key role in neurogenesis and neuroendocrine cell differentiation during embryonic and/or fetal development. Binds to the consensus sequence 5'-[TG][TC][TC][TT][GA]GGG[CG]A-3' in target promoters. Acts as a transcriptional repressor of NEUROD1 and INS expression via its interaction with cyclin CCND1 in a cell cycle-independent manner. Negatively regulates skeletal muscle-specific gene expression in endocrine cells of the pituitary by inhibiting the Notch signaling pathway. Represses target gene transcription by recruiting chromatin-modifying factors, such as HDAC1, HDAC2, HDAC3, KDM1A and RCOR1 histone deacetylases. Binds to its own promoter, suggesting autoregulation as a self-control feedback mechanism. Competes with histone H3 for the same binding site on the histone demethylase complex formed by KDM1A and RCOR1, and thereby inhibits demethylation of histone H3 at 'Lys-4'. Promotes the generation and expansion of neuronal basal progenitor cells in the developing neocortex. Involved in the differentiation of endocrine cells of the developing anterior pituitary gland, of the pancreas and intestine, and of sympatho-adrenal cells in the peripheral nervous system. Promotes cell cycle signaling arrest and inhibition of cellular proliferation. This chain is Insulinoma-associated protein 1 (Insm1), found in Mus musculus (Mouse).